We begin with the raw amino-acid sequence, 234 residues long: bZIP transcription factor 1 (234 aa).

Residues 67-134 (RAQSDGSNAL…DKQRNAQQQL (68 aa)) form a disordered region. Polar residues predominate over residues 70–86 (SDGSNALLSSIGPSGTT). Residues 88–128 (RPRDEMDCFTDTHKHKRGDGNKSRRREQCRANQARYRDKQR) show a composition bias toward basic and acidic residues. Positions 106-169 (DGNKSRRREQ…RTNQSPWNTV (64 aa)) constitute a bZIP domain. The basic motif stretch occupies residues 109–128 (KSRRREQCRANQARYRDKQR). A leucine-zipper region spans residues 134 to 155 (LERSVEQLQSELSTLKHRNLDL).

Belongs to the bZIP family. Interacts with PKZ1.

The protein resides in the nucleus. Required for normal zoospore movement, formation of appressoria by germinated zoospore cysts and plant infection. In Phytophthora infestans (Potato late blight agent), this protein is bZIP transcription factor 1.